The primary structure comprises 153 residues: Arginine repressor (153 aa).

It belongs to the ArgR family.

The protein localises to the cytoplasm. It participates in amino-acid biosynthesis; L-arginine biosynthesis [regulation]. Its function is as follows. Regulates arginine biosynthesis genes. This Haemophilus ducreyi (strain 35000HP / ATCC 700724) protein is Arginine repressor.